The sequence spans 786 residues: Endonuclease MutS2 (786 aa).

334–341 (GPNTGGKT) contacts ATP. One can recognise a Smr domain in the interval 711-786 (LDLRGERYEN…GNGATVVYFK (76 aa)).

This sequence belongs to the DNA mismatch repair MutS family. MutS2 subfamily. As to quaternary structure, homodimer. Binds to stalled ribosomes, contacting rRNA.

Its function is as follows. Endonuclease that is involved in the suppression of homologous recombination and thus may have a key role in the control of bacterial genetic diversity. Functionally, acts as a ribosome collision sensor, splitting the ribosome into its 2 subunits. Detects stalled/collided 70S ribosomes which it binds and splits by an ATP-hydrolysis driven conformational change. Acts upstream of the ribosome quality control system (RQC), a ribosome-associated complex that mediates the extraction of incompletely synthesized nascent chains from stalled ribosomes and their subsequent degradation. Probably generates substrates for RQC. The polypeptide is Endonuclease MutS2 (Ligilactobacillus salivarius (strain UCC118) (Lactobacillus salivarius)).